Here is a 323-residue protein sequence, read N- to C-terminus: Tumor-associated calcium signal transducer 2 (323 aa).

The first 26 residues, 1–26, serve as a signal peptide directing secretion; it reads MARGPGLAPPPLRLPLLLLVLAAVTG. Over 27–274 the chain is Extracellular; it reads HTAAQDNCTC…PPKFSMKRLT (248 aa). N-linked (GlcNAc...) asparagine glycosylation is present at N33. The region spanning 70–145 is the Thyroglobulin type-1 domain; that stretch reads TSKCLLLKAR…TDKGDLSLRC (76 aa). Intrachain disulfides connect C73–C108, C119–C125, and C127–C145. N120 carries N-linked (GlcNAc...) asparagine glycosylation. 2 N-linked (GlcNAc...) asparagine glycosylation sites follow: N168 and N208. The helical transmembrane segment at 275-297 threads the bilayer; sequence AGLIAVIVVVVVALVAGMAVLVI. The Cytoplasmic portion of the chain corresponds to 298–323; the sequence is TNRRKSGKYKKVEIKELGELRKEPSL.

The protein belongs to the EPCAM family. Post-translationally, the N-terminus is blocked. Placenta, pancreatic carcinoma cell lines.

It is found in the membrane. Functionally, may function as a growth factor receptor. The polypeptide is Tumor-associated calcium signal transducer 2 (TACSTD2) (Homo sapiens (Human)).